A 415-amino-acid polypeptide reads, in one-letter code: Gamma-glutamyl phosphate reductase (415 aa).

The protein belongs to the gamma-glutamyl phosphate reductase family.

It localises to the cytoplasm. It catalyses the reaction L-glutamate 5-semialdehyde + phosphate + NADP(+) = L-glutamyl 5-phosphate + NADPH + H(+). The protein operates within amino-acid biosynthesis; L-proline biosynthesis; L-glutamate 5-semialdehyde from L-glutamate: step 2/2. Catalyzes the NADPH-dependent reduction of L-glutamate 5-phosphate into L-glutamate 5-semialdehyde and phosphate. The product spontaneously undergoes cyclization to form 1-pyrroline-5-carboxylate. The protein is Gamma-glutamyl phosphate reductase of Clostridium perfringens (strain SM101 / Type A).